Consider the following 441-residue polypeptide: Glutamyl-tRNA reductase (441 aa).

Substrate is bound by residues 49–52, S110, 115–117, and Q121; these read TCNR and EPQ. C50 (nucleophile) is an active-site residue. Residue 190-195 participates in NADP(+) binding; sequence GAGEMA.

The protein belongs to the glutamyl-tRNA reductase family. In terms of assembly, homodimer.

It carries out the reaction (S)-4-amino-5-oxopentanoate + tRNA(Glu) + NADP(+) = L-glutamyl-tRNA(Glu) + NADPH + H(+). It functions in the pathway porphyrin-containing compound metabolism; protoporphyrin-IX biosynthesis; 5-aminolevulinate from L-glutamyl-tRNA(Glu): step 1/2. Catalyzes the NADPH-dependent reduction of glutamyl-tRNA(Glu) to glutamate 1-semialdehyde (GSA). The sequence is that of Glutamyl-tRNA reductase from Sulfurihydrogenibium sp. (strain YO3AOP1).